The following is an 851-amino-acid chain: Beta-galactosidase 3 (851 aa).

A signal peptide spans 1 to 29 (MAGASSYFSLRRLLLLLLPLVPLLGATTA). N-linked (GlcNAc...) asparagine glycosylation is present at Asn-35. Glu-194 functions as the Proton donor in the catalytic mechanism. The active-site Nucleophile is Glu-263. N-linked (GlcNAc...) asparagine glycans are attached at residues Asn-361, Asn-475, Asn-528, and Asn-533. One can recognise an SUEL-type lectin domain in the interval 765–851 (GRDAAKVQLS…KTLAIEADCS (87 aa)).

This sequence belongs to the glycosyl hydrolase 35 family.

The protein localises to the secreted. It localises to the extracellular space. Its subcellular location is the apoplast. It carries out the reaction Hydrolysis of terminal non-reducing beta-D-galactose residues in beta-D-galactosides.. This is Beta-galactosidase 3 from Oryza sativa subsp. japonica (Rice).